We begin with the raw amino-acid sequence, 106 residues long: MAWRLWSTTLKVSLTSTLKSLNSASMFANLRSTMTLHSSNSFRVTYYVFGFFTFRWQRSLIITSKVPSGNGIQFDFNSRTSHWLLNFLYSLSEYHLLFKVKTPFLT.

This is an uncharacterized protein from Mycoplasma pneumoniae (strain ATCC 29342 / M129 / Subtype 1) (Mycoplasmoides pneumoniae).